The primary structure comprises 620 residues: Glutathione-regulated potassium-efflux system protein KefC (620 aa).

The Periplasmic segment spans residues 1–3; it reads MDS. A helical transmembrane segment spans residues 4-24; sequence HTLIQALIYLGSAALIVPIAV. Residue Arg25 is a topological domain, cytoplasmic. A helical membrane pass occupies residues 26 to 46; sequence LGLGSVLGYLIAGCIIGPWGL. Residues 47 to 53 lie on the Periplasmic side of the membrane; it reads RLVTDAE. A helical transmembrane segment spans residues 54 to 74; sequence SILHFAEIGVVLMLFIIGLEL. Residues 75-89 lie on the Cytoplasmic side of the membrane; that stretch reads DPQRLWKLRAAVFGG. The chain crosses the membrane as a helical span at residues 90–110; the sequence is GALQMVICGGLLGLFCMLLGL. At 111–113 the chain is on the periplasmic side; the sequence is RWQ. A helical transmembrane segment spans residues 114-134; that stretch reads VAELIGMTLALSSTAIAMQAM. Over 135 to 148 the chain is Cytoplasmic; it reads NERNLMVTQMGRSA. Residues 149 to 169 form a helical membrane-spanning segment; that stretch reads FAVLLFQDIAAIPLVAMIPLL. Residues 170 to 177 lie on the Periplasmic side of the membrane; the sequence is AASSASTT. Residues 178–198 traverse the membrane as a helical segment; sequence MGAFVLSALKVAGALALVVLL. Residues 199 to 213 are Cytoplasmic-facing; it reads GRYVTRPALRFVARS. The chain crosses the membrane as a helical span at residues 214–233; that stretch reads GLREVFSAVALFLVFGFGLL. Over 234–236 the chain is Periplasmic; it reads LEE. Residues 237-254 form a helical membrane-spanning segment; the sequence is VGLSMAMGAFLAGVLLAS. Residues 255-269 are Cytoplasmic-facing; the sequence is SEYRHALESDIEPFK. The helical transmembrane segment at 270–290 threads the bilayer; that stretch reads GLLLGLFFIGVGMSIDFGTLL. Over 291 to 293 the chain is Periplasmic; the sequence is ENP. Residues 294-314 traverse the membrane as a helical segment; it reads LRIVILLLGFLIIKIAMLWLI. Residues 315–326 lie on the Cytoplasmic side of the membrane; it reads ARPLQVPNKQRR. The chain crosses the membrane as a helical span at residues 327–347; that stretch reads WFAVLLGQGSEFAFVVFGAAQ. Residues 348-358 lie on the Periplasmic side of the membrane; that stretch reads MANVLEPEWAK. The chain crosses the membrane as a helical span at residues 359–379; it reads SLTLAVALSMAATPILLVILN. Residues 380-620 lie on the Cytoplasmic side of the membrane; that stretch reads RLEQSSTEEA…ADEPETKPSS (241 aa). Positions 399 to 518 constitute an RCK N-terminal domain; sequence QPRVIIAGFG…AGVEKPERET (120 aa). The disordered stretch occupies residues 597–620; it reads GWQGTEEGKHTGNMADEPETKPSS.

Belongs to the monovalent cation:proton antiporter 2 (CPA2) transporter (TC 2.A.37) family. KefC subfamily. Homodimer. Interacts with the regulatory subunit KefF.

The protein localises to the cell inner membrane. Its function is as follows. Pore-forming subunit of a potassium efflux system that confers protection against electrophiles. Catalyzes K(+)/H(+) antiport. This chain is Glutathione-regulated potassium-efflux system protein KefC, found in Escherichia coli O6:H1 (strain CFT073 / ATCC 700928 / UPEC).